Consider the following 71-residue polypeptide: MKLTCVVIVAVLLLTACQLITADDSRGTQKHRALRSDTKLSMSTRCKGTGKPCSRIAYNCCTGSCRSGKCG.

Positions 1–22 (MKLTCVVIVAVLLLTACQLITA) are cleaved as a signal peptide. Positions 23 to 45 (DDSRGTQKHRALRSDTKLSMSTR) are excised as a propeptide. 3 disulfides stabilise this stretch: C46–C61, C53–C65, and C60–C70. P52 bears the 4-hydroxyproline; partial mark. C70 is modified (cysteine amide).

It belongs to the conotoxin M superfamily. In terms of tissue distribution, expressed by the venom duct.

It localises to the secreted. Functionally, omega-conotoxins act at presynaptic membranes, they bind and block voltage-gated calcium channels (Cav). The sequence is that of Omega-conotoxin-like CnVIIE from Conus consors (Singed cone).